Reading from the N-terminus, the 614-residue chain is Probable glutamate--tRNA ligase, cytoplasmic (614 aa).

Position 130–132 (Arg-130–Ala-132) interacts with L-glutamate. Residues Pro-135–Leu-144 carry the 'HIGH' region motif. His-140 lines the ATP pocket. L-glutamate contacts are provided by residues Asp-166, Tyr-303–Cys-307, and Arg-321. ATP-binding positions include Glu-324 and Val-359–Arg-363. Positions Val-359–Arg-363 match the 'KMSKS' region motif.

Belongs to the class-I aminoacyl-tRNA synthetase family. Glutamate--tRNA ligase type 2 subfamily.

It localises to the cytoplasm. The enzyme catalyses tRNA(Glu) + L-glutamate + ATP = L-glutamyl-tRNA(Glu) + AMP + diphosphate. The protein is Probable glutamate--tRNA ligase, cytoplasmic of Vairimorpha ceranae (strain BRL01) (Microsporidian parasite).